The sequence spans 529 residues: Peptide chain release factor 3 (529 aa).

The region spanning 11–280 (AKRRTFAIIS…GLVAWAPAPM (270 aa)) is the tr-type G domain. GTP is bound by residues 20–27 (SHPDAGKT), 88–92 (DTPGH), and 142–145 (NKLD).

Belongs to the TRAFAC class translation factor GTPase superfamily. Classic translation factor GTPase family. PrfC subfamily.

The protein localises to the cytoplasm. Increases the formation of ribosomal termination complexes and stimulates activities of RF-1 and RF-2. It binds guanine nucleotides and has strong preference for UGA stop codons. It may interact directly with the ribosome. The stimulation of RF-1 and RF-2 is significantly reduced by GTP and GDP, but not by GMP. In Salmonella typhi, this protein is Peptide chain release factor 3 (prfC).